A 423-amino-acid chain; its full sequence is D-tagatose-1,6-bisphosphate aldolase subunit GatZ (423 aa).

This sequence belongs to the GatZ/KbaZ family. GatZ subfamily. In terms of assembly, forms a complex with GatY.

It participates in carbohydrate metabolism; D-tagatose 6-phosphate degradation; D-glyceraldehyde 3-phosphate and glycerone phosphate from D-tagatose 6-phosphate: step 2/2. Its function is as follows. Component of the tagatose-1,6-bisphosphate aldolase GatYZ that is required for full activity and stability of the Y subunit. Could have a chaperone-like function for the proper and stable folding of GatY. When expressed alone, GatZ does not show any aldolase activity. Is involved in the catabolism of galactitol. The polypeptide is D-tagatose-1,6-bisphosphate aldolase subunit GatZ (Salmonella agona (strain SL483)).